We begin with the raw amino-acid sequence, 431 residues long: Enolase (431 aa).

Glutamine 163 is a (2R)-2-phosphoglycerate binding site. The Proton donor role is filled by glutamate 205. Positions 242, 288, and 315 each coordinate Mg(2+). The (2R)-2-phosphoglycerate site is built by lysine 340, arginine 369, serine 370, and lysine 391. Lysine 340 serves as the catalytic Proton acceptor.

The protein belongs to the enolase family. It depends on Mg(2+) as a cofactor.

It localises to the cytoplasm. The protein localises to the secreted. The protein resides in the cell surface. It carries out the reaction (2R)-2-phosphoglycerate = phosphoenolpyruvate + H2O. It functions in the pathway carbohydrate degradation; glycolysis; pyruvate from D-glyceraldehyde 3-phosphate: step 4/5. Catalyzes the reversible conversion of 2-phosphoglycerate (2-PG) into phosphoenolpyruvate (PEP). It is essential for the degradation of carbohydrates via glycolysis. The protein is Enolase of Latilactobacillus sakei subsp. sakei (strain 23K) (Lactobacillus sakei subsp. sakei).